We begin with the raw amino-acid sequence, 1218 residues long: NACHT, LRR and PYD domains-containing protein 1a allele 5 (1218 aa).

Positions 1–29 are enriched in polar residues; that stretch reads MGESQSKQESNTRVAQHGSQQDVDPTFQT. 2 disordered regions span residues 1-44 and 71-91; these read MGES…QVEQ and EMDH…DRSE. Residues 77–87 are compositionally biased toward basic residues; it reads RRHSHQSKKKL. Residues 175–484 form the NACHT domain; that stretch reads QLVIIEGAAG…EFFAAMSYIL (310 aa). An ATP-binding site is contributed by 181–188; the sequence is GAAGIGKS. LRR repeat units follow at residues 343–364, 673–693, and 730–750; these read KERN…LTLC, NLEE…RSLC, and RLAE…RQLC. Residues 799–815 are compositionally biased toward polar residues; it reads TMPTENTDGEESLTSSK. A disordered region spans residues 799–842; that stretch reads TMPTENTDGEESLTSSKQQQQQSGDKHMEPLGTDDDFWGPSGPV. Residues 835–968 form a ZU5 region; it reads FWGPSGPVST…HFAVLENPSF (134 aa). The 284-residue stretch at 835-1118 folds into the FIIND domain; sequence FWGPSGPVST…LRPALPRMAS (284 aa). The segment at 969-1118 is UPA; it reads SPMGVLLRMI…LRPALPRMAS (150 aa). Residues 1122–1211 form the CARD domain; sequence DAPALLHFVD…HLIMDLLEKS (90 aa).

It belongs to the NLRP family. Interacts (via LRR repeats) with BCL2 and BCL2L1 (via the loop between motifs BH4 and BH3). Interacts with NOD2; this interaction is enhanced in the presence of muramyl dipeptide (MDP) and increases IL1B release. Interacts with EIF2AK2/PKR; this interaction requires EIF2AK2 activity, is accompanied by EIF2AK2 autophosphorylation and promotes inflammasome assembly in response to danger-associated signals. Interacts with MEFV; this interaction targets Nlrp1a to degradation by autophagy, hence preventing excessive IL1B- and IL18-mediated inflammation. Interacts with DPP9; leading to inhibit activation of the inflammasome. DPP9 acts via formation of a ternary complex, composed of a DPP9 homodimer, one full-length NLRP1 protein, and one cleaved C-terminus of Nlrp1a (NACHT, LRR and PYD domains-containing protein 1a, C-terminus). Interacts with DPP8; leading to inhibit activation of the inflammasome, probably via formation of a ternary complex with DPP8. In terms of assembly, interacts with the C-terminal part of Nlrp1a (NACHT, LRR and PYD domains-containing protein 1a, C-terminus) in absence of pathogens and other damage-associated signals. As to quaternary structure, interacts with the N-terminal part of Nlrp1a (NACHT, LRR and PYD domains-containing protein 1a, N-terminus) in absence of pathogens and other damage-associated signals. Homomultimer; forms the Nlrp1a inflammasome polymeric complex, a filament composed of homopolymers of this form in response to pathogens and other damage-associated signals. The Nlrp1a inflammasome polymeric complex directly recruits pro-caspase-1 (proCASP1) independently of PYCARD/ASC. Interacts (via CARD domain) with CASP1 (via CARD domain); leading to CASP1 activation. Autocatalytically cleaved. Autocatalytic cleavage in FIIND region occurs constitutively, prior to activation signals, and is required for inflammasome activity (IL1B release), possibly by facilitating CASP1 binding. Both N- and C-terminal parts remain associated non-covalently. In terms of processing, ubiquitinated in response to pathogen-associated signals, leading to its degradation by the proteasome and subsequent release of the cleaved C-terminal part of the protein (NACHT, LRR and PYD domains-containing protein 1a, C-terminus), which polymerizes and forms the Nlrp1a inflammasome.

It is found in the cytoplasm. The protein localises to the cytosol. The protein resides in the nucleus. It localises to the inflammasome. With respect to regulation, activated by pathogens and other damage-associated signals: activation promotes ubiquitination and degradation of the N-terminal part, releasing the cleaved C-terminal part of the protein (NACHT, LRR and PYD domains-containing protein 1a, C-terminus), which polymerizes and forms the Nlrp1a inflammasome. Nlrp1a inflammasome is inhibited by DPP8 and DPP9, which sequester the C-terminal fragment of Nlrp1a (NACHT, LRR and PYD domains-containing protein 1a, C-terminus) in a ternary complex, thereby preventing Nlrp1a oligomerization and activation. Nlrp1a inflammasome is strongly activated by Val-boroPro (Talabostat, PT-100), an inhibitor of dipeptidyl peptidases DPP8 and DPP9. Val-boroPro relieves inhibition of DPP8 and/or DPP9 by promoting disruption of the ternary complex, releasing its C-terminal part from autoinhibition. Not activated by cleavage by B.anthracis lethal toxin (LT) endopeptidase. Highly activated by Toxoplasma gondii. Its function is as follows. Acts as the sensor component of the Nlrp1a inflammasome, which mediates inflammasome activation in response to various pathogen-associated signals, leading to subsequent pyroptosis. Inflammasomes are supramolecular complexes that assemble in the cytosol in response to pathogens and other damage-associated signals and play critical roles in innate immunity and inflammation. Acts as a recognition receptor (PRR): recognizes specific pathogens and other damage-associated signals, such as Val-boroPro inhibitor, and mediates the formation of the inflammasome polymeric complex. In response to pathogen-associated signals, the N-terminal part of Nlrp1a is degraded by the proteasome, releasing the cleaved C-terminal part of the protein (NACHT, LRR and PYD domains-containing protein 1a, C-terminus), which polymerizes to initiate the formation of the inflammasome complex: the inflammasome directly recruits pro-caspase-1 (proCASP1) independently of PYCARD/ASC and promotes caspase-1 (CASP1) activation, which subsequently cleaves and activates inflammatory cytokines IL1B and IL18 and gasdermin-D (GSDMD), leading to pyroptosis. In the absence of GSDMD expression, the Nlrp1a inflammasome is able to recruit and activate CASP8, leading to activation of gasdermin-E (GSDME). Functionally, constitutes the precursor of the Nlrp1a inflammasome, which mediates autoproteolytic processing within the FIIND domain to generate the N-terminal and C-terminal parts, which are associated non-covalently in absence of pathogens and other damage-associated signals. Regulatory part that prevents formation of the Nlrp1a inflammasome: in absence of pathogens and other damage-associated signals, interacts with the C-terminal part of Nlrp1a (NACHT, LRR and PYD domains-containing protein 1a, C-terminus), preventing activation of the Nlrp1a inflammasome. In response to pathogen-associated signals, this part is ubiquitinated by the N-end rule pathway and degraded by the proteasome, releasing the cleaved C-terminal part of the protein, which polymerizes and forms the Nlrp1a inflammasome. In terms of biological role, constitutes the active part of the Nlrp1a inflammasome. In absence of pathogens and other damage-associated signals, interacts with the N-terminal part of Nlrp1a (NACHT, LRR and PYD domains-containing protein 1a, N-terminus), preventing activation of the Nlrp1a inflammasome. In response to pathogen-associated signals, the N-terminal part of Nlrp1a is degraded by the proteasome, releasing this form, which polymerizes to form the Nlrp1a inflammasome complex: the Nlrp1a inflammasome complex then directly recruits pro-caspase-1 (proCASP1) and promotes caspase-1 (CASP1) activation, leading to gasdermin-D (GSDMD) cleavage and subsequent pyroptosis. The chain is NACHT, LRR and PYD domains-containing protein 1a allele 5 from Rattus norvegicus (Rat).